Here is a 406-residue protein sequence, read N- to C-terminus: MVVREKQGGRMGKGKGKGKEKECDINCFGRSFFRVLLTLQSLERMKIPSSFNQCLQNQPTGMVSLVDRSGNKWSAELTSDSEGFFFVHGWKEFVRDNSIQCGQFLVFTYDKRSQFSVTVFEPSGIDKISTFSAHPSKNVIIKTESDEGGMVTAAITTEKMAPALKENNGITGKRTRDVDYLMEDRVVVFKKSSEANVCESSRRKRAGASAGKSKVTSTSHNSTRGSSCSSDEDNSSSKSPNPPFLMRFLSGEVSRRGRCVSKGQRQLTVISQRRPVTEAEKDHALQRAREFKSKNPFAVQIMMESYVYVGFFMNIPCEFVRECLPHTNKRITLWDPQGKAWEVNYVYYSDRSVGSFSGGWGKFAVGNNLEKFDVCVFELVQKDNIKVHIYRVVPEITPHKLRSDPK.

A disordered region spans residues 1-20 (MVVREKQGGRMGKGKGKGKE). Residues 30-123 (RSFFRVLLTL…QFSVTVFEPS (94 aa)) constitute a DNA-binding region (TF-B3 1). The interval 199-245 (ESSRRKRAGASAGKSKVTSTSHNSTRGSSCSSDEDNSSSKSPNPPFL) is disordered. A compositionally biased stretch (polar residues) spans 214 to 225 (KVTSTSHNSTRG). Residues 298–393 (AVQIMMESYV…NIKVHIYRVV (96 aa)) constitute a DNA-binding region (TF-B3 2).

It is found in the nucleus. This Oryza sativa subsp. japonica (Rice) protein is B3 domain-containing protein Os11g0197600.